Here is a 635-residue protein sequence, read N- to C-terminus: Chaperone protein DnaK (635 aa).

The residue at position 200 (threonine 200) is a Phosphothreonine; by autocatalysis. Positions 595–635 (KAQPLTEKVQAKSSAENTSKEKSKADDDVVDADFEEVKDDK) are disordered. A compositionally biased stretch (basic and acidic residues) spans 612–621 (TSKEKSKADD). A compositionally biased stretch (acidic residues) spans 622–635 (DVVDADFEEVKDDK).

It belongs to the heat shock protein 70 family.

Acts as a chaperone. This Ruthia magnifica subsp. Calyptogena magnifica protein is Chaperone protein DnaK.